A 93-amino-acid polypeptide reads, in one-letter code: MARSVKKGPFIDDHLMKKITKLNSENQKKPFKTWSRRSTIFPDMVGHTVMVHNGKQFTPVYINENMIGHKLGEFSPTRTFRAHVAGDKKAAKK.

It belongs to the universal ribosomal protein uS19 family.

Functionally, protein S19 forms a complex with S13 that binds strongly to the 16S ribosomal RNA. The sequence is that of Small ribosomal subunit protein uS19 from Leptospira interrogans serogroup Icterohaemorrhagiae serovar copenhageni (strain Fiocruz L1-130).